The chain runs to 734 residues: Photosystem I P700 chlorophyll a apoprotein A2 (734 aa).

Helical transmembrane passes span 46–69, 135–158, 175–199, 273–291, 330–353, 369–395, 417–439, and 517–535; these read IFAS…FHVA, LYTG…LHLQ, LNHH…HVAI, MAHH…GHMY, IHFQ…QHMY, AALY…IFFI, AIIS…LYVH, and FLVH…LILV. [4Fe-4S] cluster is bound by residues Cys-559 and Cys-568. Transmembrane regions (helical) follow at residues 575 to 596 and 643 to 665; these read AFYL…YWHW and LSVW…MFLI. Residues His-654, Met-662, and Tyr-670 each coordinate chlorophyll a. A phylloquinone-binding site is contributed by Trp-671. The helical transmembrane segment at 707-727 threads the bilayer; the sequence is LVGLAHFSVGYIFTYAAFLIA.

Belongs to the PsaA/PsaB family. In terms of assembly, the PsaA/B heterodimer binds the P700 chlorophyll special pair and subsequent electron acceptors. PSI consists of a core antenna complex that captures photons, and an electron transfer chain that converts photonic excitation into a charge separation. The eukaryotic PSI reaction center is composed of at least 11 subunits. The cofactor is P700 is a chlorophyll a/chlorophyll a' dimer, A0 is one or more chlorophyll a, A1 is one or both phylloquinones and FX is a shared 4Fe-4S iron-sulfur center..

It is found in the plastid. The protein resides in the chloroplast thylakoid membrane. It carries out the reaction reduced [plastocyanin] + hnu + oxidized [2Fe-2S]-[ferredoxin] = oxidized [plastocyanin] + reduced [2Fe-2S]-[ferredoxin]. Its function is as follows. PsaA and PsaB bind P700, the primary electron donor of photosystem I (PSI), as well as the electron acceptors A0, A1 and FX. PSI is a plastocyanin-ferredoxin oxidoreductase, converting photonic excitation into a charge separation, which transfers an electron from the donor P700 chlorophyll pair to the spectroscopically characterized acceptors A0, A1, FX, FA and FB in turn. Oxidized P700 is reduced on the lumenal side of the thylakoid membrane by plastocyanin. This Crucihimalaya wallichii (Rock-cress) protein is Photosystem I P700 chlorophyll a apoprotein A2.